Reading from the N-terminus, the 366-residue chain is Phospho-N-acetylmuramoyl-pentapeptide-transferase (366 aa).

The next 10 helical transmembrane spans lie at 27–47, 71–91, 93–113, 134–154, 174–194, 205–225, 245–265, 268–288, 294–314, and 343–363; these read AALFTSALIVFLFGPTIINSL, TPTMGGLMILAGIVGASLLWA, LSNVYVVATLLVTLGFGAIGF, LGIEFVIAGIAVYFMMRTALA, FLINLGIMFVVFGGFVIVGAG, GLAIVPVMIAAASFGVIAYLA, LAVVLGAVIGAGLGFLWFNAP, AIFMGDTGSLALGGTIGTVAV, IVMAIIGGLFVMETLSVIIQV, and QVVIRFWIIAVGLALLGLSTL.

This sequence belongs to the glycosyltransferase 4 family. MraY subfamily. Mg(2+) is required as a cofactor.

The protein resides in the cell inner membrane. It catalyses the reaction UDP-N-acetyl-alpha-D-muramoyl-L-alanyl-gamma-D-glutamyl-meso-2,6-diaminopimeloyl-D-alanyl-D-alanine + di-trans,octa-cis-undecaprenyl phosphate = di-trans,octa-cis-undecaprenyl diphospho-N-acetyl-alpha-D-muramoyl-L-alanyl-D-glutamyl-meso-2,6-diaminopimeloyl-D-alanyl-D-alanine + UMP. Its pathway is cell wall biogenesis; peptidoglycan biosynthesis. Functionally, catalyzes the initial step of the lipid cycle reactions in the biosynthesis of the cell wall peptidoglycan: transfers peptidoglycan precursor phospho-MurNAc-pentapeptide from UDP-MurNAc-pentapeptide onto the lipid carrier undecaprenyl phosphate, yielding undecaprenyl-pyrophosphoryl-MurNAc-pentapeptide, known as lipid I. This Rhizobium etli (strain ATCC 51251 / DSM 11541 / JCM 21823 / NBRC 15573 / CFN 42) protein is Phospho-N-acetylmuramoyl-pentapeptide-transferase.